The following is a 153-amino-acid chain: Histone H2B type W-T (153 aa).

Positions 1 to 54 (MATASAMAGPSSETTSEEQLITQEPKEANSTTSQKQSKQRKRGRHGPRRCHSNC) are disordered. Over residues 11–36 (SSETTSEEQLITQEPKEANSTTSQKQ) the composition is skewed to polar residues. Residues 37–52 (SKQRKRGRHGPRRCHS) show a composition bias toward basic residues.

The protein belongs to the histone H2B family. In terms of assembly, can replace the conventional histone H2B in the nucleosome. The nucleosome is a histone octamer containing two molecules each of H2A, H2B, H3 and H4 assembled in one H3-H4 heterotetramer and two H2A-H2B heterodimers. The octamer wraps approximately 147 bp of DNA. As to expression, testis-specific (at protein level).

The protein resides in the nucleus membrane. Its subcellular location is the chromosome. It localises to the telomere. Functionally, atypical histone H2B that can form nucleosomes structurally and dynamically indistinguishable from those containing conventional H2B. Nucleosomes wrap and compact DNA into chromatin, limiting DNA accessibility to the cellular machineries which require DNA as a template. Histones thereby play a central role in transcription regulation, DNA repair, DNA replication and chromosomal stability. DNA accessibility is regulated via a complex set of post-translational modifications of histones, also called histone code, and nucleosome remodeling. However, unlike conventional H2B, does not recruit chromosome condensation factors and does not participate in the assembly of mitotic chromosomes. May be important for telomere function and play a role in spermatogenesis. In Homo sapiens (Human), this protein is Histone H2B type W-T.